A 398-amino-acid polypeptide reads, in one-letter code: Acetate kinase (398 aa).

N8 serves as a coordination point for Mg(2+). ATP is bound at residue K15. R90 is a substrate binding site. The Proton donor/acceptor role is filled by D147. ATP contacts are provided by residues 207–211 (HIGAG), 282–284 (DMR), and 330–334 (GVGEN). E383 is a Mg(2+) binding site.

Belongs to the acetokinase family. As to quaternary structure, homodimer. The cofactor is Mg(2+). Requires Mn(2+) as cofactor.

It is found in the cytoplasm. It catalyses the reaction acetate + ATP = acetyl phosphate + ADP. Its pathway is metabolic intermediate biosynthesis; acetyl-CoA biosynthesis; acetyl-CoA from acetate: step 1/2. Catalyzes the formation of acetyl phosphate from acetate and ATP. Can also catalyze the reverse reaction. The chain is Acetate kinase from Limosilactobacillus fermentum (strain NBRC 3956 / LMG 18251) (Lactobacillus fermentum).